A 1140-amino-acid chain; its full sequence is Receptor-type guanylate cyclase gcy-3 (1140 aa).

The N-terminal stretch at 1-21 is a signal peptide; the sequence is MKNVFQLLIPLFFHLFSLVSL. Over 22 to 495 the chain is Extracellular; that stretch reads QNIPVSTGTT…CPLPFWEQYG (474 aa). Asn-220, Asn-301, Asn-349, Asn-385, Asn-418, Asn-441, and Asn-459 each carry an N-linked (GlcNAc...) asparagine glycan. The chain crosses the membrane as a helical span at residues 496–516; sequence ILIFVGAGVFLIMITTNLICF. At 517–1140 the chain is on the cytoplasmic side; the sequence is LFMIKNRREE…RQYKMDTLKI (624 aa). A Protein kinase domain is found at 538–826; that stretch reads FVKLRELERK…NICEQLRDLM (289 aa). ATP contacts are provided by residues 544 to 552 and Lys-582; that span reads LERKSKGTS. One can recognise a Guanylate cyclase domain in the interval 897-1027; it reads TVFFSDVVKF…DTVNTASRME (131 aa). Residues 1083 to 1140 are disordered; that stretch reads PSISNRSTPPVTQERFTVRAPDTPEARSVSSHGSRPSSNHNNNNDPLYRQYKMDTLKI. Residues 1084-1097 show a composition bias toward polar residues; that stretch reads SISNRSTPPVTQER. Residues 1109-1126 are compositionally biased toward low complexity; it reads RSVSSHGSRPSSNHNNNN.

The protein belongs to the adenylyl cyclase class-4/guanylyl cyclase family. Expressed asymmetrically in ASE right (ASER) sensory neuron and bilaterally in ASI sensory neurons. Expressed in PVT interneuron.

The protein localises to the cell membrane. It carries out the reaction GTP = 3',5'-cyclic GMP + diphosphate. Its function is as follows. Guanylate cyclase involved in the production of the second messenger cGMP. The sequence is that of Receptor-type guanylate cyclase gcy-3 from Caenorhabditis elegans.